The following is a 255-amino-acid chain: ParA family protein CT_582 (255 aa).

The protein belongs to the ParA family.

The polypeptide is ParA family protein CT_582 (Chlamydia trachomatis serovar D (strain ATCC VR-885 / DSM 19411 / UW-3/Cx)).